The sequence spans 401 residues: 3-oxoadipyl-CoA/3-oxo-5,6-dehydrosuberyl-CoA thiolase (401 aa).

The Acyl-thioester intermediate role is filled by Cys-90. Catalysis depends on proton acceptor residues His-357 and Cys-387.

The protein belongs to the thiolase-like superfamily. Thiolase family.

It catalyses the reaction succinyl-CoA + acetyl-CoA = 3-oxoadipyl-CoA + CoA. The enzyme catalyses 2,3-didehydroadipoyl-CoA + acetyl-CoA = 3-oxo-5,6-didehydrosuberyl-CoA + CoA. The protein operates within aromatic compound metabolism; phenylacetate degradation. Catalyzes the thiolytic cleavage of the beta-keto C8 intermediate 3-oxo-5,6-dehydrosuberyl-CoA with CoA to yield the C6 intermediate 2,3-dehydroadipyl-CoA and acetyl-CoA. Besides it catalyzes also the last step of the pathway, in which 3-oxoadipyl-CoA similarly is cleaved to acetyl-CoA and succinyl-CoA. In Escherichia coli (strain K12), this protein is 3-oxoadipyl-CoA/3-oxo-5,6-dehydrosuberyl-CoA thiolase (paaJ).